A 436-amino-acid polypeptide reads, in one-letter code: Chaperone protein dnaJ 16 (436 aa).

Residues 20–85 form the J domain; sequence DPYEVLGVLR…EKRRQFDSAG (66 aa). Positions 291–348 form a coiled coil; the sequence is TQEKEDLRSVEAQILTKRAELAKFETEYREVLVQFTDMTSRYAQEMQSIDELLKQRNE. Residues 360–416 form a disordered region; it reads KRSSSKNRMRKSSFKKAAAKAPAPTEQEEEEEEEEEEEEESSRQKNKKPSTCDKSET. Residues 362–377 show a composition bias toward basic residues; that stretch reads SSSKNRMRKSSFKKAA. Over residues 385–399 the composition is skewed to acidic residues; the sequence is EQEEEEEEEEEEEEE.

This sequence belongs to the DnaJ family. B/II subfamily. Expressed constitutively in seedlings, roots, leaves, stems, flowers and siliques.

It is found in the membrane. Plays a continuous role in plant development probably in the structural organization of compartments. Seems to not be involved in gravitropism signaling pathway. The protein is Chaperone protein dnaJ 16 (ATJ16) of Arabidopsis thaliana (Mouse-ear cress).